Consider the following 544-residue polypeptide: Membrane protein insertase YidC (544 aa).

5 helical membrane-spanning segments follow: residues 6–26, 343–363, 418–438, 456–476, and 497–517; these read NLLL…WETD, KFLH…TFIV, LGGC…YYML, LSAQ…MFFI, and PVIF…YYIV.

This sequence belongs to the OXA1/ALB3/YidC family. Type 1 subfamily. Interacts with the Sec translocase complex via SecD. Specifically interacts with transmembrane segments of nascent integral membrane proteins during membrane integration.

Its subcellular location is the cell inner membrane. Required for the insertion and/or proper folding and/or complex formation of integral membrane proteins into the membrane. Involved in integration of membrane proteins that insert both dependently and independently of the Sec translocase complex, as well as at least some lipoproteins. Aids folding of multispanning membrane proteins. This chain is Membrane protein insertase YidC, found in Pectobacterium atrosepticum (strain SCRI 1043 / ATCC BAA-672) (Erwinia carotovora subsp. atroseptica).